We begin with the raw amino-acid sequence, 162 residues long: Lymphocyte antigen 86 (162 aa).

The signal sequence occupies residues 1–19 (MNGVAAALLVWILTSPSSS). 3 cysteine pairs are disulfide-bonded: C33-C58, C45-C154, and C102-C112. The N-linked (GlcNAc...) asparagine glycan is linked to N96. N156 carries an N-linked (GlcNAc...) asparagine glycan.

In terms of assembly, M-shaped tetramer of two CD180-LY86 heterodimers. Highly expressed in spleen, liver, brain and thymus, and at lower levels in kidney.

The protein localises to the secreted. It is found in the extracellular space. May cooperate with CD180 and TLR4 to mediate the innate immune response to bacterial lipopolysaccharide (LPS) and cytokine production. Important for efficient CD180 cell surface expression. In Mus musculus (Mouse), this protein is Lymphocyte antigen 86 (Ly86).